The chain runs to 465 residues: Hydroxyacid-oxoacid transhydrogenase, mitochondrial (465 aa).

N6-acetyllysine is present on Lys-443. The residue at position 450 (Ser-450) is a Phosphoserine.

It belongs to the iron-containing alcohol dehydrogenase family. Hydroxyacid-oxoacid transhydrogenase subfamily. As to expression, expressed in white and brown adipose tissues, liver, and kidney. Expression is differentiation-dependent during in vitro brown and white adipogenesis.

It localises to the mitochondrion. It catalyses the reaction (S)-3-hydroxybutanoate + 2-oxoglutarate = (R)-2-hydroxyglutarate + acetoacetate. The enzyme catalyses 4-hydroxybutanoate + 2-oxoglutarate = (R)-2-hydroxyglutarate + succinate semialdehyde. Its function is as follows. Catalyzes the cofactor-independent reversible oxidation of gamma-hydroxybutyrate (GHB) to succinic semialdehyde (SSA) coupled to reduction of 2-ketoglutarate (2-KG) to D-2-hydroxyglutarate (D-2-HG). L-3-hydroxybutyrate (L-3-OHB) is also a substrate for HOT when using 2-KG as hydrogen acceptor, resulting in the formation of D-2-HG. This Mus musculus (Mouse) protein is Hydroxyacid-oxoacid transhydrogenase, mitochondrial (Adhfe1).